The chain runs to 126 residues: UPF0102 protein HD_0802 (126 aa).

It belongs to the UPF0102 family.

The polypeptide is UPF0102 protein HD_0802 (Haemophilus ducreyi (strain 35000HP / ATCC 700724)).